The following is a 338-amino-acid chain: Methionine import ATP-binding protein MetN 2 (338 aa).

The ABC transporter domain occupies 2-242 (IQLEGVSVDF…PQHAFTRQLV (241 aa)). ATP is bound at residue 39–46 (GTSGAGKS).

This sequence belongs to the ABC transporter superfamily. Methionine importer (TC 3.A.1.24) family. The complex is composed of two ATP-binding proteins (MetN), two transmembrane proteins (MetI) and a solute-binding protein (MetQ).

It localises to the cell inner membrane. The enzyme catalyses L-methionine(out) + ATP + H2O = L-methionine(in) + ADP + phosphate + H(+). It catalyses the reaction D-methionine(out) + ATP + H2O = D-methionine(in) + ADP + phosphate + H(+). In terms of biological role, part of the ABC transporter complex MetNIQ involved in methionine import. Responsible for energy coupling to the transport system. The chain is Methionine import ATP-binding protein MetN 2 from Pectobacterium atrosepticum (strain SCRI 1043 / ATCC BAA-672) (Erwinia carotovora subsp. atroseptica).